The following is a 160-amino-acid chain: Photosystem I reaction center subunit XI (160 aa).

The next 2 membrane-spanning stretches (helical) occupy residues 84–104 (LIPA…YGLV) and 125–145 (FAAG…FLLE).

Belongs to the PsaL family.

Its subcellular location is the cellular thylakoid membrane. The chain is Photosystem I reaction center subunit XI from Microcystis aeruginosa (strain NIES-843 / IAM M-2473).